Here is a 102-residue protein sequence, read N- to C-terminus: uncharacterized protein (102 aa).

This is an uncharacterized protein from Acidianus filamentous virus 1 (isolate United States/Yellowstone) (AFV-1).